A 976-amino-acid polypeptide reads, in one-letter code: MNQVIKTIALCYQKYISRASNKTFSIHNTLSLSLLPKCLLGSLIIYTSHAFGEMELAISGHKYGKDRDAFTMISSCPEGTNYMINRKLILSEFSSLDKFSSGGAFKNLAGKIAFLGKHSSSSIHFKHLNINGFGSGIFSESAIEFSDLRKLVAFGSESTGGIFTARDDISFKNNHYIAFRNNIAKGNGGVILLQGDERGTVSFTDQQGAIIFANNQALVSPSIKHSGRGGAISGDFAGSRIIFLNNQQITFEENSAVHGGAIYNKNGVVEFLGNGGTLSFKENSTRANGGAIYTGKFKANQQTAPIIFSQNNANQKGGAIYAQYVNLEQNQDAIRFENNSAKEGGGAISSSQCAITAHNSITFSNNFAGDLGGGAILLGGKQPSLSLVAHNGNIAFIGNTMLPATKKASLPRNNSILVKESPYKIQFAANKNRSIIFFDPVIALSPSTSPVEINSPEHETPFFSPKGTIVFSGANLIDDAKEDIANRTSIFNQPVLLHNGTLSIESGAHLVVQSFKQTGGRISLSPGSSLALYTTNTLFHGNVSSTDPLEINGLSLGVDTSPSNLYSEIRAGSAPLKLSGSPDIHDPERLFYENRDSAASPYQMEILLSSDKIIDVSNFTIDAPVPNKEAGFQGSWHFSWQPNTVNNTKHKVLRASWIPTGEYILEPSRVGNAIPNSLWSTFLLLQTASHNLGDHLCNNSDLVPTSYLGLLIGGIGAEMRTYSAEKESFISRSGTTGTTIIRLTPTLTLSGGATHMFGDSFVTKLPEFIASEGMVQNVGLTQILGPLTVKSTLCAALDHNAMIRLSAQKNHTRAKWDTFGIRGTLGASYSLLDYENMVRIFTFANVEATNVLQKSFTETGYNPRSFARTRLTNIAVPVGIGYEFCLSNHSFALLGKGHIGYSRDIKRKNPVTFAQLAMNNFSWTANGCQVPTSAHTIANQLILRYKACSLYVNAVATKLESTYLSSSLSCGGYVGF.

An N-terminal signal peptide occupies residues 1–50 (MNQVIKTIALCYQKYISRASNKTFSIHNTLSLSLLPKCLLGSLIIYTSHA). One can recognise an Autotransporter domain in the interval 671 to 976 (GNAIPNSLWS…SLSCGGYVGF (306 aa)).

It belongs to the PMP outer membrane protein family.

It is found in the secreted. The protein localises to the cell wall. The protein resides in the cell outer membrane. In Chlamydia muridarum (strain MoPn / Nigg), this protein is Probable outer membrane protein PmpA (pmpA).